The sequence spans 278 residues: Putative protein-disulfide oxidoreductase RF_0032 (278 aa).

The first 18 residues, 1 to 18 (MRSIFIVPIFLLFLSSCS), serve as a signal peptide directing secretion. The interval 62–84 (VPANDNNQTDEVSTPPSQEQKNP) is disordered. Residues 65–81 (NDNNQTDEVSTPPSQEQ) are compositionally biased toward polar residues. The Thioredoxin domain occupies 77–266 (PSQEQKNPEI…ISTAVDKALE (190 aa)). Cys-119 and Cys-122 are disulfide-bonded.

It belongs to the thioredoxin family. DsbA subfamily.

It localises to the periplasm. May be required for disulfide bond formation in some proteins. The chain is Putative protein-disulfide oxidoreductase RF_0032 from Rickettsia felis (strain ATCC VR-1525 / URRWXCal2) (Rickettsia azadi).